Reading from the N-terminus, the 340-residue chain is Tetraacyldisaccharide 4'-kinase (340 aa).

51-58 (HMGGAGKT) lines the ATP pocket.

It belongs to the LpxK family.

The enzyme catalyses a lipid A disaccharide + ATP = a lipid IVA + ADP + H(+). It participates in glycolipid biosynthesis; lipid IV(A) biosynthesis; lipid IV(A) from (3R)-3-hydroxytetradecanoyl-[acyl-carrier-protein] and UDP-N-acetyl-alpha-D-glucosamine: step 6/6. Its function is as follows. Transfers the gamma-phosphate of ATP to the 4'-position of a tetraacyldisaccharide 1-phosphate intermediate (termed DS-1-P) to form tetraacyldisaccharide 1,4'-bis-phosphate (lipid IVA). The chain is Tetraacyldisaccharide 4'-kinase from Rhodopseudomonas palustris (strain ATCC BAA-98 / CGA009).